The following is a 256-amino-acid chain: GTP cyclohydrolase FolE2 (256 aa).

It belongs to the GTP cyclohydrolase IV family.

It catalyses the reaction GTP + H2O = 7,8-dihydroneopterin 3'-triphosphate + formate + H(+). The protein operates within cofactor biosynthesis; 7,8-dihydroneopterin triphosphate biosynthesis; 7,8-dihydroneopterin triphosphate from GTP: step 1/1. In terms of biological role, converts GTP to 7,8-dihydroneopterin triphosphate. This is GTP cyclohydrolase FolE2 from Caldicellulosiruptor bescii (strain ATCC BAA-1888 / DSM 6725 / KCTC 15123 / Z-1320) (Anaerocellum thermophilum).